Consider the following 68-residue polypeptide: Large ribosomal subunit protein uL30 (68 aa).

The segment at Met-1–Ser-26 is disordered. A compositionally biased stretch (polar residues) spans Ser-8–Gly-18.

The protein belongs to the universal ribosomal protein uL30 family. Part of the 50S ribosomal subunit.

The sequence is that of Large ribosomal subunit protein uL30 from Parvibaculum lavamentivorans (strain DS-1 / DSM 13023 / NCIMB 13966).